Here is an 821-residue protein sequence, read N- to C-terminus: DNA ligase (821 aa).

NAD(+) is bound by residues 33-37 (DVDYD), 82-83 (SL), and glutamate 113. Catalysis depends on lysine 115, which acts as the N6-AMP-lysine intermediate. Residues arginine 136, glutamate 173, lysine 290, and lysine 314 each coordinate NAD(+). Zn(2+) is bound by residues cysteine 408, cysteine 411, cysteine 426, and cysteine 432. Residues 741-821 (IVAGPLDGQT…RLLAYLAEHE (81 aa)) form the BRCT domain.

This sequence belongs to the NAD-dependent DNA ligase family. LigA subfamily. Mg(2+) serves as cofactor. It depends on Mn(2+) as a cofactor.

The enzyme catalyses NAD(+) + (deoxyribonucleotide)n-3'-hydroxyl + 5'-phospho-(deoxyribonucleotide)m = (deoxyribonucleotide)n+m + AMP + beta-nicotinamide D-nucleotide.. Functionally, DNA ligase that catalyzes the formation of phosphodiester linkages between 5'-phosphoryl and 3'-hydroxyl groups in double-stranded DNA using NAD as a coenzyme and as the energy source for the reaction. It is essential for DNA replication and repair of damaged DNA. The polypeptide is DNA ligase (Stenotrophomonas maltophilia (strain K279a)).